The following is a 225-amino-acid chain: Probable septum site-determining protein MinC (225 aa).

This sequence belongs to the MinC family. In terms of assembly, interacts with MinD and FtsZ.

Functionally, cell division inhibitor that blocks the formation of polar Z ring septums. Rapidly oscillates between the poles of the cell to destabilize FtsZ filaments that have formed before they mature into polar Z rings. Prevents FtsZ polymerization. This is Probable septum site-determining protein MinC from Listeria monocytogenes serotype 4a (strain HCC23).